Consider the following 145-residue polypeptide: 3-hydroxyacyl-[acyl-carrier-protein] dehydratase FabZ (145 aa).

His47 is a catalytic residue.

This sequence belongs to the thioester dehydratase family. FabZ subfamily.

The protein localises to the cytoplasm. The enzyme catalyses a (3R)-hydroxyacyl-[ACP] = a (2E)-enoyl-[ACP] + H2O. Functionally, involved in unsaturated fatty acids biosynthesis. Catalyzes the dehydration of short chain beta-hydroxyacyl-ACPs and long chain saturated and unsaturated beta-hydroxyacyl-ACPs. The sequence is that of 3-hydroxyacyl-[acyl-carrier-protein] dehydratase FabZ from Polaromonas naphthalenivorans (strain CJ2).